The primary structure comprises 518 residues: Nif-specific regulatory protein (518 aa).

A GAF domain is found at 35–176; it reads NTARALAAIL…MVANLISQPL (142 aa). The Sigma-54 factor interaction domain occupies 205 to 432; it reads VGKSQAMRQT…LENCLERASV (228 aa). ATP-binding positions include 232–239 and 295–304; these read GESGTGKE and ADGGTLFLDE. The tract at residues 433 to 475 is inter-domain linker; that stretch reads MTDEGLIDRDVILFNHHESPALSVKPGLPLATDESWLDQELDE. Positions 476 to 518 are C-terminal DNA-binding domain; it reads RQRVIAALEKTGWVQAKAARLLGMTPRQIAYRIQIMDINMHRI. A DNA-binding region (H-T-H motif) is located at residues 490 to 509; it reads QAKAARLLGMTPRQIAYRIQ.

Interacts with sigma-54.

Its function is as follows. Required for activation of most nif operons, which are directly involved in nitrogen fixation. This chain is Nif-specific regulatory protein (nifA), found in Enterobacter agglomerans (Erwinia herbicola).